The chain runs to 185 residues: Ribosome-recycling factor (185 aa).

The protein belongs to the RRF family.

The protein localises to the cytoplasm. In terms of biological role, responsible for the release of ribosomes from messenger RNA at the termination of protein biosynthesis. May increase the efficiency of translation by recycling ribosomes from one round of translation to another. The protein is Ribosome-recycling factor of Neisseria meningitidis serogroup A / serotype 4A (strain DSM 15465 / Z2491).